Consider the following 425-residue polypeptide: Serine--tRNA ligase (425 aa).

The interval 108 to 134 is disordered; that stretch reads YPNLPSEACPDGRSEDDNKEVRRWGDP. Positions 117–134 are enriched in basic and acidic residues; that stretch reads PDGRSEDDNKEVRRWGDP. L-serine is bound at residue 233–235; it reads TAE. ATP is bound at residue 264–266; sequence RRE. L-serine is bound at residue E287. 351–354 serves as a coordination point for ATP; that stretch reads EISS. S385 contacts L-serine.

The protein belongs to the class-II aminoacyl-tRNA synthetase family. Type-1 seryl-tRNA synthetase subfamily. Homodimer. The tRNA molecule binds across the dimer.

Its subcellular location is the cytoplasm. It catalyses the reaction tRNA(Ser) + L-serine + ATP = L-seryl-tRNA(Ser) + AMP + diphosphate + H(+). It carries out the reaction tRNA(Sec) + L-serine + ATP = L-seryl-tRNA(Sec) + AMP + diphosphate + H(+). It functions in the pathway aminoacyl-tRNA biosynthesis; selenocysteinyl-tRNA(Sec) biosynthesis; L-seryl-tRNA(Sec) from L-serine and tRNA(Sec): step 1/1. In terms of biological role, catalyzes the attachment of serine to tRNA(Ser). Is also able to aminoacylate tRNA(Sec) with serine, to form the misacylated tRNA L-seryl-tRNA(Sec), which will be further converted into selenocysteinyl-tRNA(Sec). The protein is Serine--tRNA ligase of Synechococcus sp. (strain CC9311).